The chain runs to 90 residues: MPAGVDLEKETVITGRVVDGSGQAVGGAFVRLLDGSDEFTAEVVASATGDFRFFAAPGTWTVRALSSAGNGNVTVAPTGAGIHEVDVKVA.

Lysine 88 is covalently cross-linked (Isoglutamyl lysine isopeptide (Lys-Gln) (interchain with Q-Cter in protein Pup)).

This is an uncharacterized protein from Mycolicibacterium smegmatis (strain ATCC 700084 / mc(2)155) (Mycobacterium smegmatis).